Here is a 241-residue protein sequence, read N- to C-terminus: Uridylate kinase (241 aa).

15 to 18 (KMSG) lines the ATP pocket. UMP is bound at residue glycine 57. ATP contacts are provided by glycine 58 and arginine 62. UMP contacts are provided by residues aspartate 77 and 138 to 145 (TGNPFFTT). The ATP site is built by threonine 165, tyrosine 171, and aspartate 174.

This sequence belongs to the UMP kinase family. Homohexamer.

It localises to the cytoplasm. It carries out the reaction UMP + ATP = UDP + ADP. It participates in pyrimidine metabolism; CTP biosynthesis via de novo pathway; UDP from UMP (UMPK route): step 1/1. With respect to regulation, inhibited by UTP. Its function is as follows. Catalyzes the reversible phosphorylation of UMP to UDP. In Dichelobacter nodosus (strain VCS1703A), this protein is Uridylate kinase.